Here is a 598-residue protein sequence, read N- to C-terminus: IQ calmodulin-binding motif-containing protein 1 (598 aa).

Residues 1–157 form an interaction with BBS1, BBS8 and BBS9 region; it reads MKPTGTDPRI…SLFWLLGGHV (157 aa). The interval 287–598 is interaction with CEP290, BBS1, BBS2, BBS4, BBS5, BBS7, BBS8 and BBS9; it reads QEVEEQKLHQ…NLFIGGTKPP (312 aa). 4 IQ domains span residues 294 to 317, 318 to 338, 387 to 416, and 417 to 437; these read LHQAACLIQAYWKGFQTRKRLKKL, PSAVIALQRSFRSKRSKMLLE, EEKSALIIQKHWRGYRERKNFHQQRQSLIE, and YKAAVTLQRAALKFLAKCRKK. Residues 336-373 are a coiled coil; that stretch reads LLEINRQKEEEDLKLQLQLQRQRAMRLSRELQLSMLEI. Residues 530–598 are interaction with BBS1, BBS2, BBS4, BBS7, BBS8 and BBS9; that stretch reads AEGKEPELFL…NLFIGGTKPP (69 aa). At serine 572 the chain carries Phosphoserine.

In terms of assembly, interacts with CEP290/NPHP6; IQCB1/NPHP5 and CEP290 are proposed to form a functional NPHP5-6 module/NPHP6; localized to the centrosome. Interacts with calmodulin, ATXN10. Interacts with NPHP1, INVS, NPHP4 and RPGRIP1L; these interactions likely require additional interactors. Associates with the BBSome complex; interacts with BBS1, BBS2, BBS4, BBS5, BBS7, BBS8 and BBS9. In terms of tissue distribution, ubiquitously expressed in fetal and adult tissues. Localized to the outer segments and connecting cilia of photoreceptor cells. Up-regulated in a number of primary colorectal and gastric tumors.

The protein localises to the cytoplasm. Its subcellular location is the cytoskeleton. It is found in the microtubule organizing center. It localises to the centrosome. The protein resides in the centriole. Involved in ciliogenesis. The function in an early step in cilia formation depends on its association with CEP290/NPHP6. Involved in regulation of the BBSome complex integrity, specifically for presence of BBS2 and BBS5 in the complex, and in ciliary targeting of selected BBSome cargos. May play a role in controlling entry of the BBSome complex to cilia possibly implicating CEP290/NPHP6. This is IQ calmodulin-binding motif-containing protein 1 (IQCB1) from Homo sapiens (Human).